The following is a 496-amino-acid chain: RNA-binding motif protein, Y chromosome, family 1 member B (496 aa).

The RRM domain occupies 8 to 85 (GKLFIGGLNR…KAIKVEQAKK (78 aa)). Disordered regions lie at residues 67–349 (DMNG…HRDY) and 452–496 (KDQR…SSRY). 2 stretches are compositionally biased toward low complexity: residues 97 to 114 (PASS…SARG) and 149 to 159 (PVKRGPSSRSG). Positions 175 to 184 (NSWMGSQGPM) are enriched in polar residues. Basic and acidic residues-rich tracts occupy residues 204–214 (RNDRMSTRHDG), 242–253 (DNGHSNRDEHSS), 276–289 (AYRD…DESY), 313–326 (GYRD…HESY), 335–349 (SSRE…HRDY), and 484–496 (GESR…SSRY).

As to quaternary structure, interacts with splicing factor proteins SFRS3/SRP20, TRA2B/SFRS10, KHDRBS1/SAM68 and KHDRBS3. Testis-specific.

Its subcellular location is the nucleus. In terms of biological role, RNA-binding protein which may be involved in spermatogenesis. Required for sperm development, possibly by participating in pre-mRNA splicing in the testis. In Homo sapiens (Human), this protein is RNA-binding motif protein, Y chromosome, family 1 member B (RBMY1B).